Consider the following 2235-residue polypeptide: Bridge-like lipid transfer protein family member 2 (2235 aa).

Positions 1–31 (MPLFFSALLVLLLVALSALFLGRWLVVRLAT) are cleaved as a signal peptide. Residues 29–108 (LATKWCQRKL…LQKVSDLSAP (80 aa)) form a transmembrane domain region. Ser563 bears the Phosphoserine mark. Residue Asn730 is glycosylated (N-linked (GlcNAc...) asparagine). The interval 1495–1529 (PQMPAKKPKRGVPTSASAPPRVNTPSFSGQPDKGS) is disordered. Residues 1813 to 1885 (SILHLQEAVR…LNILIRCFKD (73 aa)) are a coiled coil. Ser1846, Ser2090, and Ser2094 each carry phosphoserine. The disordered stretch occupies residues 2074–2099 (GKGVAQGLTRSSGVRRSFRKSPEHPV).

It belongs to the SABRE family. Expressed in pancreas, placenta and up-regulated in breast carcinoma epithelial cells, ductal in situ carcinoma (DCIS), invasive breast carcinoma (IBC) and metastatic breast carcinoma cells (MET).

Its subcellular location is the cell membrane. The protein localises to the endoplasmic reticulum membrane. The protein resides in the mitochondrion membrane. Its function is as follows. Tube-forming lipid transport protein which binds to phosphatidylinositols and affects phosphatidylinositol-4,5-bisphosphate (PtdIns-4,5-P2) distribution. This is Bridge-like lipid transfer protein family member 2 from Homo sapiens (Human).